The primary structure comprises 524 residues: RNA-splicing ligase RtcB homolog 1 (524 aa).

D141, C144, H249, H281, and H372 together coordinate Mn(2+). Position 248–252 (248–252 (NHYLE)) interacts with GMP. GMP-binding positions include 372 to 373 (HN), 421 to 424 (GGSM), S428, 447 to 450 (HGAG), and K523. Residue H447 is the GMP-histidine intermediate of the active site.

The protein belongs to the RtcB family. As to quaternary structure, catalytic component of the tRNA-splicing ligase complex. Mn(2+) is required as a cofactor.

The catalysed reaction is a 3'-end 3'-phospho-ribonucleotide-RNA + a 5'-end dephospho-ribonucleoside-RNA + GTP = a ribonucleotidyl-ribonucleotide-RNA + GMP + diphosphate. It catalyses the reaction a 3'-end 2',3'-cyclophospho-ribonucleotide-RNA + a 5'-end dephospho-ribonucleoside-RNA + GTP + H2O = a ribonucleotidyl-ribonucleotide-RNA + GMP + diphosphate + H(+). Its function is as follows. Catalytic subunit of the tRNA-splicing ligase complex that acts by directly joining spliced tRNA halves to mature-sized tRNAs by incorporating the precursor-derived splice junction phosphate into the mature tRNA as a canonical 3',5'-phosphodiester. May act as an RNA ligase with broad substrate specificity, and may function toward other RNAs. The sequence is that of RNA-splicing ligase RtcB homolog 1 from Entamoeba histolytica (strain ATCC 30459 / HM-1:IMSS / ABRM).